A 413-amino-acid chain; its full sequence is Gamma-lactamase FDB1 (413 aa).

Zn(2+) is bound by residues histidine 126, histidine 128, aspartate 130, histidine 131, histidine 211, aspartate 235, and histidine 323.

It belongs to the metallo-beta-lactamase superfamily.

It participates in xenobiotic degradation. Functionally, gamma-lactamase; part of the Fusarium detoxification of benzoxazolinone cluster involved in the degradation of benzoxazolinones produced by the host plant. Maize, wheat, and rye produce the 2 benzoxazinone phytoanticipins 2,4-dihy-droxy-7-methoxy-1,4-benzoxazin-3-one (DIMBOA) and 2,4-dihydroxy-1,4-benzoxazin-3-one (DIBOA) that, due to their inherent instability once released, spontaneously degrade to the more stable corresponding benzoxazolinones, 6-methoxy-2-benzoxazolinone (MBOA) and 2-benzoxazolinone (BOA), respectively. The first step in the detoxification of benzoxazolinones involves the hydrolysis of the cyclic ester bond of benzoxazolinones by the gamma-lactamase FDB1 to aminophenols. FDB1 is able to convert BOA into 2-aminophenol (2-AP), as well as MBOA into 5-methoxy-2-aminophenol (2-AMP). The N-malonyltransferase FDB2 then metabolizes aminophenols via N-malonylation to non-toxic malonamic acids. FDB2 converts 2-AP into N-(2-hydroxyphenyl) malonamic acid (HPMA) and 2-AMP into N-(2-hydroxy-4-methoxyphenyl) malonamic acid (HMPMA). The cluster also contains 2 transcription factors (FDB3 and FPSE_08121), an aldo-keto reductase (FPSE_08125) that possibly associates with a ketone component of BOA and MBOA degradation, an esterase (FPSE_08126), an acyl-CoA transferase (FPSE_08120), a solute carrier protein (FPSE_08119) and a transmembrane transporter (FPSE_08127) proposed to shuttle metabolites of benzoxazolinone degradation. In Fusarium pseudograminearum (strain CS3096) (Wheat and barley crown-rot fungus), this protein is Gamma-lactamase FDB1.